A 307-amino-acid chain; its full sequence is MQYSTLAGQTDNSLVSNNFGFLRLPLNFMPYESHADWVITGVPYDMAVSGRSGARFGPEAIRRASVNLAWEHRRFPWTFDVRERLNIIDCGDLVFSFGDSRDFVEKMEAHAGKLLSFGKRCLSLGGDHFITLPLLRAHARYFGKLALIHFDAHTDTYDNGSEYDHGTMFYTAPKEGLIDPSRSVQIGIRTEHSKKLPFTVLSAPKVNEDSVEETVRKIKETVGNMPVYLTFDIDCLDPSFAPGTGTPVCGGLSSDRALKILRGLTDLDIVGMDVVEVAPSYDQSDITALAGATIALEMLYLQGAKKD.

Residues His128, Asp151, His153, Asp155, Asp232, and Asp234 each coordinate Mn(2+).

Belongs to the arginase family. Agmatinase subfamily. It depends on Mn(2+) as a cofactor.

It carries out the reaction agmatine + H2O = urea + putrescine. It participates in amine and polyamine biosynthesis; putrescine biosynthesis via agmatine pathway; putrescine from agmatine: step 1/1. In terms of biological role, catalyzes the formation of putrescine from agmatine. The polypeptide is Agmatinase (Neisseria gonorrhoeae (strain ATCC 700825 / FA 1090)).